The sequence spans 208 residues: FMN-dependent NADH:quinone oxidoreductase 1 (208 aa).

Belongs to the azoreductase type 1 family. Homodimer. FMN is required as a cofactor.

The enzyme catalyses 2 a quinone + NADH + H(+) = 2 a 1,4-benzosemiquinone + NAD(+). The catalysed reaction is N,N-dimethyl-1,4-phenylenediamine + anthranilate + 2 NAD(+) = 2-(4-dimethylaminophenyl)diazenylbenzoate + 2 NADH + 2 H(+). Functionally, quinone reductase that provides resistance to thiol-specific stress caused by electrophilic quinones. In terms of biological role, also exhibits azoreductase activity. Catalyzes the reductive cleavage of the azo bond in aromatic azo compounds to the corresponding amines. This is FMN-dependent NADH:quinone oxidoreductase 1 from Bacillus licheniformis (strain ATCC 14580 / DSM 13 / JCM 2505 / CCUG 7422 / NBRC 12200 / NCIMB 9375 / NCTC 10341 / NRRL NRS-1264 / Gibson 46).